The following is a 383-amino-acid chain: Dual-specificity RNA methyltransferase RlmN (383 aa).

E93 acts as the Proton acceptor in catalysis. Positions 99–339 (EETRGTLCVS…TTIRKTRGDD (241 aa)) constitute a Radical SAM core domain. C106 and C344 are disulfide-bonded. Residues C113, C117, and C120 each contribute to the [4Fe-4S] cluster site. S-adenosyl-L-methionine is bound by residues 170–171 (GE), S202, 224–226 (SLH), and N301. C344 serves as the catalytic S-methylcysteine intermediate.

This sequence belongs to the radical SAM superfamily. RlmN family. [4Fe-4S] cluster serves as cofactor.

It is found in the cytoplasm. The enzyme catalyses adenosine(2503) in 23S rRNA + 2 reduced [2Fe-2S]-[ferredoxin] + 2 S-adenosyl-L-methionine = 2-methyladenosine(2503) in 23S rRNA + 5'-deoxyadenosine + L-methionine + 2 oxidized [2Fe-2S]-[ferredoxin] + S-adenosyl-L-homocysteine. It catalyses the reaction adenosine(37) in tRNA + 2 reduced [2Fe-2S]-[ferredoxin] + 2 S-adenosyl-L-methionine = 2-methyladenosine(37) in tRNA + 5'-deoxyadenosine + L-methionine + 2 oxidized [2Fe-2S]-[ferredoxin] + S-adenosyl-L-homocysteine. Functionally, specifically methylates position 2 of adenine 2503 in 23S rRNA and position 2 of adenine 37 in tRNAs. m2A2503 modification seems to play a crucial role in the proofreading step occurring at the peptidyl transferase center and thus would serve to optimize ribosomal fidelity. The sequence is that of Dual-specificity RNA methyltransferase RlmN from Ralstonia pickettii (strain 12J).